A 235-amino-acid chain; its full sequence is Carboxy-S-adenosyl-L-methionine synthase (235 aa).

S-adenosyl-L-methionine is bound by residues Tyr35, 60 to 62 (GCS), 83 to 84 (DN), Asn124, and Arg191.

This sequence belongs to the class I-like SAM-binding methyltransferase superfamily. Cx-SAM synthase family. As to quaternary structure, homodimer.

The catalysed reaction is prephenate + S-adenosyl-L-methionine = carboxy-S-adenosyl-L-methionine + 3-phenylpyruvate + H2O. Its function is as follows. Catalyzes the conversion of S-adenosyl-L-methionine (SAM) to carboxy-S-adenosyl-L-methionine (Cx-SAM). The sequence is that of Carboxy-S-adenosyl-L-methionine synthase from Campylobacter jejuni subsp. jejuni serotype O:6 (strain 81116 / NCTC 11828).